Here is an 84-residue protein sequence, read N- to C-terminus: Putative antitoxin VapB7 (84 aa).

Its function is as follows. Antitoxin component of a possible type II toxin-antitoxin (TA) system. The cognate toxin is VapC7. The protein is Putative antitoxin VapB7 (vapB7) of Mycobacterium tuberculosis (strain ATCC 25618 / H37Rv).